A 623-amino-acid chain; its full sequence is Glutathione import ATP-binding protein GsiA (623 aa).

ABC transporter domains are found at residues 15–269 and 314–564; these read VENL…RALL and LRVR…RKLL. Residues 49 to 56 and 357 to 364 contribute to the ATP site; these read GESGSGKS.

This sequence belongs to the ABC transporter superfamily. Glutathione importer (TC 3.A.1.5.11) family. The complex is composed of two ATP-binding proteins (GsiA), two transmembrane proteins (GsiC and GsiD) and a solute-binding protein (GsiB).

It is found in the cell inner membrane. It carries out the reaction glutathione(out) + ATP + H2O = glutathione(in) + ADP + phosphate + H(+). Functionally, part of the ABC transporter complex GsiABCD involved in glutathione import. Responsible for energy coupling to the transport system. This chain is Glutathione import ATP-binding protein GsiA, found in Escherichia coli O1:K1 / APEC.